Consider the following 851-residue polypeptide: UPF0182 protein CYA_1810 (851 aa).

7 helical membrane passes run 7-27, 47-67, 76-96, 141-161, 168-188, 220-240, and 259-279; these read GLVLLLWAGLGILAITALASF, VLARWGLGLGAFAFALAVVGS, ASTAGAWAIALGLSGGLAWSL, FNLVLLTLITVALIYLVELGL, LALSLFAQRHLLILGGALFLL, LPATTLMSGVAFLTAVGFWAL, and WASSLLAPALLWGAYLGFGLL.

The protein belongs to the UPF0182 family.

The protein resides in the cell membrane. The chain is UPF0182 protein CYA_1810 from Synechococcus sp. (strain JA-3-3Ab) (Cyanobacteria bacterium Yellowstone A-Prime).